The chain runs to 82 residues: Acyl carrier protein (82 aa).

A Carrier domain is found at 2 to 77 (DNVADRVKKV…QAIDYVSAHI (76 aa)). Position 37 is an O-(pantetheine 4'-phosphoryl)serine (serine 37).

The protein belongs to the acyl carrier protein (ACP) family. Post-translationally, 4'-phosphopantetheine is transferred from CoA to a specific serine of apo-ACP by AcpS. This modification is essential for activity because fatty acids are bound in thioester linkage to the sulfhydryl of the prosthetic group.

The protein resides in the cytoplasm. Its pathway is lipid metabolism; fatty acid biosynthesis. Functionally, carrier of the growing fatty acid chain in fatty acid biosynthesis. The polypeptide is Acyl carrier protein (Acidithiobacillus ferrooxidans (strain ATCC 23270 / DSM 14882 / CIP 104768 / NCIMB 8455) (Ferrobacillus ferrooxidans (strain ATCC 23270))).